The following is a 420-amino-acid chain: 4-hydroxy-3-methylbut-2-en-1-yl diphosphate synthase (flavodoxin) (420 aa).

Residues Cys307, Cys310, Cys353, and Glu360 each contribute to the [4Fe-4S] cluster site.

This sequence belongs to the IspG family. Requires [4Fe-4S] cluster as cofactor.

It catalyses the reaction (2E)-4-hydroxy-3-methylbut-2-enyl diphosphate + oxidized [flavodoxin] + H2O + 2 H(+) = 2-C-methyl-D-erythritol 2,4-cyclic diphosphate + reduced [flavodoxin]. Its pathway is isoprenoid biosynthesis; isopentenyl diphosphate biosynthesis via DXP pathway; isopentenyl diphosphate from 1-deoxy-D-xylulose 5-phosphate: step 5/6. Converts 2C-methyl-D-erythritol 2,4-cyclodiphosphate (ME-2,4cPP) into 1-hydroxy-2-methyl-2-(E)-butenyl 4-diphosphate. This is 4-hydroxy-3-methylbut-2-en-1-yl diphosphate synthase (flavodoxin) from Brucella melitensis biotype 2 (strain ATCC 23457).